The following is a 420-amino-acid chain: O-methyltransferase opaF (420 aa).

Residues 262–263, Asp287, and 308–309 contribute to the S-adenosyl-L-methionine site; these read GG and DL. The Proton acceptor role is filled by His328.

The protein belongs to the class I-like SAM-binding methyltransferase superfamily. Cation-independent O-methyltransferase family.

Its pathway is secondary metabolite biosynthesis. O-methyltransferase; part of the gene cluster that mediates the biosynthesis of oxepinamides, derivatives of anthranilyl-containing tripeptides that share an oxepin ring and a fused pyrimidinone moiety. The nonribosomal peptide synthetase (NRPS) opaA assembles the quinazolinone core with D-Phe incorporation. The first adenylation domain (A1) of opaA loads and activates anthranilic acid whereas the second A domain (A2) is for activating of L-Phe, which is then converted to D-form by the E domain. The third A domain (A3) is responsible for L-Ile activation and the terminal condensation domain C3 for cyclization and releasing the NRPS product protuboxepin K. The cytochrome P450 monooxygenase opaB then catalyzes alone the oxepin ring formation to convert protuboxepin K into protuboxepin A. The flavoenzyme opaC installs subsequently one hydroxyl group at the oxepin ring, accompanied by double bond migration, to form 15-epi-oxepinamide E. The epimerase opaE changes the D-Phe residue back to L-form, leading to oxepinamide E, which is further methylated at the hydroxyl group at C-12 by the O-methyltransferase OpaF to yield oxepinamide F. The polypeptide is O-methyltransferase opaF (Aspergillus ustus).